Consider the following 91-residue polypeptide: Uteroglobin (91 aa).

The N-terminal stretch at 1-21 (MKLAVTLTLVTLALCCSSASA) is a signal peptide.

The protein belongs to the secretoglobin family. In terms of assembly, antiparallel homodimer; disulfide-linked. Interaction with LMBR1L has been observed in PubMed:16423471, but not in PubMed:23964685. In terms of tissue distribution, club cells (nonciliated cells of the surface epithelium of the pulmonary airways).

The protein localises to the secreted. In terms of biological role, binds phosphatidylcholine, phosphatidylinositol, polychlorinated biphenyls (PCB) and weakly progesterone, potent inhibitor of phospholipase A2. The protein is Uteroglobin (SCGB1A1) of Homo sapiens (Human).